Reading from the N-terminus, the 348-residue chain is MDDNKKKALAAALGQIEKQFGKGSIMKLGDNRTMDVETVSTGSLSLDIALGAGGLPMGRIVEIFGPESSGKTTLTLELIAAAQREGKTCAFIDAEHALDPVYAKKLGVNIDELLVSQPDTGEQALEICDALARSGAVDVMVIDSVAALTPKAEIEGEMGDSHMGLQARMLSQAMRKLTGNLKQSNCMAIFINQIRMKIGVMFGNPETTTGGNALKFYASVRLDIRRTGAVKDGDEVVGNETRIKVVKNKIAAPFKQAETQIMYGQGFNREGELIDLGVKHKLVDKAGAWYSYNGDKIGQGKANASKFMRENTEVAAELDKKLREMLLTPAEEKPETDAAPEIEENEEF.

65 to 72 (GPESSGKT) is a binding site for ATP. A compositionally biased stretch (basic and acidic residues) spans 326–336 (LLTPAEEKPET). Residues 326 to 348 (LLTPAEEKPETDAAPEIEENEEF) form a disordered region. The segment covering 338–348 (AAPEIEENEEF) has biased composition (acidic residues).

The protein belongs to the RecA family.

The protein localises to the cytoplasm. In terms of biological role, can catalyze the hydrolysis of ATP in the presence of single-stranded DNA, the ATP-dependent uptake of single-stranded DNA by duplex DNA, and the ATP-dependent hybridization of homologous single-stranded DNAs. It interacts with LexA causing its activation and leading to its autocatalytic cleavage. In Aliivibrio fischeri (strain ATCC 700601 / ES114) (Vibrio fischeri), this protein is Protein RecA.